The following is a 274-amino-acid chain: MDLPLFVIALILGIVEGLTEFLPISSTGHLIIIGDLLGYNDATSKVFKIVIQFAAILAVCWDYRERLARVAAGVGSEPAAQRFVGLLFIGFLPAAVLGLMFHSTIKSLLFNPLTVATALVVGGVLILWLERRAYHPRINAVDEMRWADALKVGFAQAAAMIPGTSRSGATILGGLVFGLSRKAAAEFSFFLSIPTMFAATVYDLYKNRDLLHMGDLPVFAIGFVASFFAAMFAVKAFIRFISNHTFIAFAWYRIVFGLVVLATWQLELVEWSEP.

Helical transmembrane passes span 4–24, 41–61, 83–103, 108–128, 184–204, 218–238, and 246–266; these read PLFV…FLPI, DATS…AVCW, FVGL…MFHS, LLFN…LILW, AAEF…VYDL, VFAI…KAFI, and FIAF…TWQL.

This sequence belongs to the UppP family.

It localises to the cell inner membrane. It catalyses the reaction di-trans,octa-cis-undecaprenyl diphosphate + H2O = di-trans,octa-cis-undecaprenyl phosphate + phosphate + H(+). In terms of biological role, catalyzes the dephosphorylation of undecaprenyl diphosphate (UPP). Confers resistance to bacitracin. This is Undecaprenyl-diphosphatase from Aromatoleum aromaticum (strain DSM 19018 / LMG 30748 / EbN1) (Azoarcus sp. (strain EbN1)).